Reading from the N-terminus, the 637-residue chain is Chaperone protein DnaK (637 aa).

Thr198 is subject to Phosphothreonine; by autocatalysis. Residues 601 to 615 (AQQKAQAEQAGADAG) show a composition bias toward low complexity. Positions 601–637 (AQQKAQAEQAGADAGEQPKQDDDVVDAEFEEVKEDKK) are disordered. The span at 623 to 637 (DVVDAEFEEVKEDKK) shows a compositional bias: acidic residues.

It belongs to the heat shock protein 70 family.

In terms of biological role, acts as a chaperone. This chain is Chaperone protein DnaK, found in Vibrio atlanticus (strain LGP32) (Vibrio splendidus (strain Mel32)).